The sequence spans 314 residues: DNA-directed RNA polymerase subunit alpha (314 aa).

Positions 1-227 (MLEIEKPKIE…DYLKLFVALT (227 aa)) are alpha N-terminal domain (alpha-NTD). The segment at 244–314 (QDKILEMTIE…LGLSLRKSED (71 aa)) is alpha C-terminal domain (alpha-CTD).

It belongs to the RNA polymerase alpha chain family. Homodimer. The RNAP catalytic core consists of 2 alpha, 1 beta, 1 beta' and 1 omega subunit. When a sigma factor is associated with the core the holoenzyme is formed, which can initiate transcription.

The enzyme catalyses RNA(n) + a ribonucleoside 5'-triphosphate = RNA(n+1) + diphosphate. DNA-dependent RNA polymerase catalyzes the transcription of DNA into RNA using the four ribonucleoside triphosphates as substrates. In Heliobacterium modesticaldum (strain ATCC 51547 / Ice1), this protein is DNA-directed RNA polymerase subunit alpha.